Reading from the N-terminus, the 372-residue chain is Probable leucine aminopeptidase MCYG_08380 (372 aa).

Residues 1–19 (MKVSVLAAVAAFAAATAIA) form the signal peptide. Residue Asn-96 is glycosylated (N-linked (GlcNAc...) asparagine). Residues His-175 and Asp-194 each coordinate Zn(2+). N-linked (GlcNAc...) asparagine glycosylation is found at Asn-195 and Asn-219. Zn(2+) contacts are provided by Glu-233 and Asp-260. A disulfide bridge connects residues Cys-305 and Cys-309. Zn(2+) is bound at residue His-338.

Belongs to the peptidase M28 family. M28E subfamily. Monomer. Requires Zn(2+) as cofactor.

Its subcellular location is the secreted. In terms of biological role, probable extracellular aminopeptidase which contributes to pathogenicity. This is Probable leucine aminopeptidase MCYG_08380 from Arthroderma otae (strain ATCC MYA-4605 / CBS 113480) (Microsporum canis).